Reading from the N-terminus, the 1004-residue chain is Bifunctional glutamine synthetase adenylyltransferase/adenylyl-removing enzyme (1004 aa).

The adenylyl removase stretch occupies residues 1–496; it reads MVRPPSARSA…LHAKLFYRPL (496 aa). Residues 502–1004 form an adenylyl transferase region; that stretch reads RMDPDALRLS…RAVVERVFGS (503 aa).

This sequence belongs to the GlnE family. Requires Mg(2+) as cofactor.

It carries out the reaction [glutamine synthetase]-O(4)-(5'-adenylyl)-L-tyrosine + phosphate = [glutamine synthetase]-L-tyrosine + ADP. The catalysed reaction is [glutamine synthetase]-L-tyrosine + ATP = [glutamine synthetase]-O(4)-(5'-adenylyl)-L-tyrosine + diphosphate. Its function is as follows. Involved in the regulation of glutamine synthetase GlnA, a key enzyme in the process to assimilate ammonia. When cellular nitrogen levels are high, the C-terminal adenylyl transferase (AT) inactivates GlnA by covalent transfer of an adenylyl group from ATP to specific tyrosine residue of GlnA, thus reducing its activity. Conversely, when nitrogen levels are low, the N-terminal adenylyl removase (AR) activates GlnA by removing the adenylyl group by phosphorolysis, increasing its activity. The regulatory region of GlnE binds the signal transduction protein PII (GlnB) which indicates the nitrogen status of the cell. This is Bifunctional glutamine synthetase adenylyltransferase/adenylyl-removing enzyme from Nocardia farcinica (strain IFM 10152).